The primary structure comprises 489 residues: 5'-AMP-activated protein kinase subunit gamma-3 (489 aa).

The disordered stretch occupies residues 1 to 113; the sequence is MEPGLEHALR…PAGVGTPPTG (113 aa). The segment covering 34–46 has biased composition (low complexity); the sequence is SSSWPSPAVTSSS. Over residues 50–62 the composition is skewed to basic residues; that stretch reads RGKRRAKALRWTR. CBS domains are found at residues 197 to 258, 280 to 340, and 355 to 415; these read MATS…RSPL, CFKP…LLPR, and TFRD…HLDM. ADP is bound by residues arginine 225, 240-245, valine 285, 306-307, and lysine 325; these read MLTITD and HR. Residues arginine 225, 240 to 245, valine 285, histidine 306, 306 to 307, lysine 325, threonine 355, alanine 360, 381 to 382, 397 to 400, arginine 424, leucine 432, histidine 453, 453 to 454, and 469 to 472 contribute to the AMP site; these read MLTITD, HR, SA, SRFD, and SLSD. ATP contacts are provided by residues arginine 225, 240–245, valine 285, 306–307, arginine 307, and lysine 325; these read MLTITD and HR. The short motif at 293-314 is the AMPK pseudosubstrate element; it reads LFEAVYTLIKNRIHRLPVLDPV. ADP contacts are provided by residues 397 to 400, arginine 424, leucine 432, and 453 to 454; these read SRFD and HR. Residues 397 to 400, arginine 424, leucine 432, and 453 to 454 contribute to the ATP site; these read SRFD and HR. One can recognise a CBS 4 domain in the interval 427–486; the sequence is CLEGVLSCQPHESLGEVIDRIAREQVHRLVLVDETQHLLGVVSLSDILQALVLSPAGIDA.

The protein belongs to the 5'-AMP-activated protein kinase gamma subunit family. In terms of assembly, AMPK is a heterotrimer of an alpha catalytic subunit (PRKAA1 or PRKAA2), a beta (PRKAB1 or PRKAB2) and a gamma non-catalytic subunits (PRKAG1, PRKAG2 or PRKAG3). Interacts with FNIP1 and FNIP2. Post-translationally, phosphorylated by ULK1; leading to negatively regulate AMPK activity and suggesting the existence of a regulatory feedback loop between ULK1 and AMPK. In terms of processing, glycosylated; O-GlcNAcylated by OGT, promoting the AMP-activated protein kinase (AMPK) activity. As to expression, skeletal muscle, with weak expression in heart and pancreas.

In terms of biological role, AMP/ATP-binding subunit of AMP-activated protein kinase (AMPK), an energy sensor protein kinase that plays a key role in regulating cellular energy metabolism. In response to reduction of intracellular ATP levels, AMPK activates energy-producing pathways and inhibits energy-consuming processes: inhibits protein, carbohydrate and lipid biosynthesis, as well as cell growth and proliferation. AMPK acts via direct phosphorylation of metabolic enzymes, and by longer-term effects via phosphorylation of transcription regulators. AMPK also acts as a regulator of cellular polarity by remodeling the actin cytoskeleton; probably by indirectly activating myosin. The AMPK gamma3 subunit is a non-catalytic subunit with a regulatory role in muscle energy metabolism. It mediates binding to AMP, ADP and ATP, leading to AMPK activation or inhibition: AMP-binding results in allosteric activation of alpha catalytic subunit (PRKAA1 or PRKAA2) both by inducing phosphorylation and preventing dephosphorylation of catalytic subunits. ADP also stimulates phosphorylation, without stimulating already phosphorylated catalytic subunit. ATP promotes dephosphorylation of catalytic subunit, rendering the AMPK enzyme inactive. The polypeptide is 5'-AMP-activated protein kinase subunit gamma-3 (PRKAG3) (Homo sapiens (Human)).